A 1181-amino-acid chain; its full sequence is MASFLKPVNSQGLWLSLLLAITYLFLLPSAGQSLDPSGIGLAAGCSQSQGGISSFAALPRPCNDSVCTLPDLGWSCQRTAQDTANQQQSPFNHTGHFLTTSGWTWPNWTCSPSQCQLLIHLPTWQIVKQDFLLLLKEWDLLTMCQRCSDLLTKTPGFILRFAGETLILVANLIEFVLVSWSLWLCSVLVYVAQAVPGKFLLYMAAFCTTFWAWPRETASSLIRIVTTPLTLIGFLNKTGIGLISHCLALTWNMFMTWSLLPWVTLMKMMKILITSSRVLTRSGRPKRTSSKSLKHKLKISRAIQKKQGKKTPVEERTIPGVQIKKLREDPPKGVILRCTDQFGDHVGYASAVKLEKGQTGIVLPIHVWTDTVYINGPNGKLKMADFTALYEVTNHDSLIMTSAMAGWGSILGVRPRPLTTIDAVKLKNYSLFTERDGKWYVQAAKCIAPAEGMFRVVSDTRPGDSGLPLFDMKMNVVAVHRGTWPSERFPENRAFAILPVPDLTSSSSPKFTGCETYSEAETAYEMADNFSDGEEILIRTKGQSYRTFIGSNKVALLSIRKLEEELSRGPIGLWADDTEDDESAPRRSGKRIIPVDSGETKSSEDPLPKGRGVSSTPSRSKSRKGKACPSFRNDAGTEESRQPQEEKGQSCQEDSLNSTQEIQGQSTHFVPSSGTGRKSCESSPHRPTTKITSIFEDFYRWKEPREEAPGFNSVGSCPFTVYKCPPKGLSSWGERVARTSAFLQACTEKYSWPETGAEAELSSLRYQAARRQSAQTTAVIPPKDVREDLIKRTTEAYRSTALPAPMWAHNFDESHMRFEFWECVRKLKGQAGSGVPYAAFSGRKTNDKWVFDHESTEDLWETVRDRLFRLLNQDFIDPVQAVKDGLVDPIRLFVKLEPHKMEKIRNKRYRLIASVSIVDQLVARMLFRDQNEEELLQHMAIPSKPGLGFSQDHQVLAFTESVAALAGTSAQDLVDNWSRYLTPTDCSGFDWSVPMWLLEDDLAVRNELTLGLPHGLRKMRETWLKCLGQSVFCLSNGLLLAQTSPGIQKSGSFNTSSTNSRMRYMLALYAGASWAVTMGDDALESVGSDLSQYARLGIKCERAEEFDFCSHLFRAPDVVIPKNLEKMVYGLLSGTSPESPLLADRFSWLSALQSILEEMRHMPQDFVNMLIEHLGVGDLVE.

The signal sequence occupies residues 1–33 (MASFLKPVNSQGLWLSLLLAITYLFLLPSAGQS). Helical transmembrane passes span 172 to 192 (LIEF…VYVA), 194 to 214 (AVPG…WAWP), 218 to 235 (ASSL…IGFL), and 240 to 260 (IGLI…WSLL). Residues 318–515 (IPGVQIKKLR…SSSPKFTGCE (198 aa)) enclose the Peptidase S39 domain. Residues His366, Asp396, and Ser465 each act as for protease activity in the active site. Residues 572–688 (GLWADDTEDD…SCESSPHRPT (117 aa)) are disordered. Composition is skewed to basic and acidic residues over residues 598-608 (GETKSSEDPLP) and 638-648 (EESRQPQEEKG). A compositionally biased stretch (polar residues) spans 649 to 677 (QSCQEDSLNSTQEIQGQSTHFVPSSGTGR). The 116-residue stretch at 979–1094 (RYLTPTDCSG…SVGSDLSQYA (116 aa)) folds into the RdRp catalytic domain.

The protein belongs to the luteoviruses RNA polymerase family. In terms of processing, specific enzymatic cleavages in vivo yield mature proteins. The protease probably cleaves itself and releases the RdRp (Potential). Cleavages have been shown in the P1 protein, but since the N-terminus containing the serine protease is shared between P1 and P1-P2, cleavages should also occur within the P1-P2 protein.

The protein localises to the membrane. It catalyses the reaction RNA(n) + a ribonucleoside 5'-triphosphate = RNA(n+1) + diphosphate. RNA-dependent RNA polymerase that plays an essential role in virus replication. This is Protein P1-P2 from Cicer arietinum (Chickpea).